Reading from the N-terminus, the 64-residue chain is Large ribosomal subunit protein bL28 (64 aa).

The protein belongs to the bacterial ribosomal protein bL28 family.

The protein is Large ribosomal subunit protein bL28 of Bifidobacterium longum (strain NCC 2705).